The primary structure comprises 332 residues: UDP-galactose/UDP-glucose transporter 1 (332 aa).

Transmembrane regions (helical) follow at residues 11–31, 49–69, 80–100, 112–132, 135–155, 206–226, 252–272, and 301–317; these read ILLL…QGVL, HLAF…YIMI, APWW…AMGI, VLAK…VYGI, TFPE…FALL, IMLG…FGLP, ICGA…GSLA, and WGCV…QIYL. Positions 327 to 332 match the Di-lysine motif motif; sequence KKKQKS.

Belongs to the nucleotide-sugar transporter family. UDP-galactose:UMP antiporter (TC 2.A.7.11) subfamily.

Its subcellular location is the endoplasmic reticulum membrane. Essential sugar transporter required for the transport of UDP-galactose and UDP-glucose from the cytoplasm into the Golgi and the endoplasmic reticulum, to ensure quality control of protein folding. Essential for pollen development and involved in embryo sac progress. The polypeptide is UDP-galactose/UDP-glucose transporter 1 (Arabidopsis thaliana (Mouse-ear cress)).